We begin with the raw amino-acid sequence, 109 residues long: Nucleoid-associated protein BCB4264_A0025 (109 aa).

It belongs to the YbaB/EbfC family. As to quaternary structure, homodimer.

The protein resides in the cytoplasm. Its subcellular location is the nucleoid. Its function is as follows. Binds to DNA and alters its conformation. May be involved in regulation of gene expression, nucleoid organization and DNA protection. The sequence is that of Nucleoid-associated protein BCB4264_A0025 from Bacillus cereus (strain B4264).